Here is a 657-residue protein sequence, read N- to C-terminus: Glycogen debranching enzyme (657 aa).

The Nucleophile role is filled by aspartate 336. Glutamate 371 acts as the Proton donor in catalysis. Basic and acidic residues predominate over residues 458-467; sequence NEANGEENRD. Positions 458 to 479 are disordered; sequence NEANGEENRDGTNNNYSNNHGK.

This sequence belongs to the glycosyl hydrolase 13 family.

It carries out the reaction Hydrolysis of (1-&gt;6)-alpha-D-glucosidic linkages to branches with degrees of polymerization of three or four glucose residues in limit dextrin.. Its pathway is glycan degradation; glycogen degradation. Removes maltotriose and maltotetraose chains that are attached by 1,6-alpha-linkage to the limit dextrin main chain, generating a debranched limit dextrin. This Escherichia coli (strain 55989 / EAEC) protein is Glycogen debranching enzyme.